Here is a 134-residue protein sequence, read N- to C-terminus: Lymphocyte antigen 6G (134 aa).

The N-terminal stretch at 1-26 is a signal peptide; the sequence is MDTCHIAKSCVLILLVVLLCAERAQG. In terms of domain architecture, UPAR/Ly6 spans 27–118; sequence LECYNCIGVP…PTGGSSWTMA (92 aa). 5 disulfide bridges follow: cysteine 29/cysteine 53, cysteine 32/cysteine 41, cysteine 46/cysteine 74, cysteine 78/cysteine 98, and cysteine 99/cysteine 104. A lipid anchor (GPI-anchor amidated asparagine) is attached at asparagine 105. A propeptide spans 106-134 (removed in mature form); sequence AAVPTGGSSWTMAGVLLFSLVSVLLQTFL.

As to expression, expressed in bone marrow.

The protein resides in the cell membrane. The chain is Lymphocyte antigen 6G (Ly6g) from Mus musculus (Mouse).